A 740-amino-acid chain; its full sequence is Death domain-associated protein 6 (740 aa).

The segment at 1–55 (MATANSIIVLDDDDEDEAAAQPGPSHPLPNAASPGAEAPSSSEPHGARGSSSSGG) is disordered. The segment at 1 to 160 (MATANSIIVL…TSNEPSGNNP (160 aa)) is necessary for interaction with USP7 and ATRX. Serine 25 carries the post-translational modification Phosphoserine. Positions 29–55 (PNAASPGAEAPSSSEPHGARGSSSSGG) are enriched in low complexity. Lysine 142 is covalently cross-linked (Glycyl lysine isopeptide (Lys-Gly) (interchain with G-Cter in SUMO2)). Residues 147–185 (PAATTSNEPSGNNPPTHLSLDPTNAENTASQSPRTRGSR) are disordered. Polar residues predominate over residues 149–181 (ATTSNEPSGNNPPTHLSLDPTNAENTASQSPRT). Serine 178 and serine 213 each carry phosphoserine. Coiled-coil stretches lie at residues 180-217 (RTRG…ELDD) and 358-399 (ARRL…ARLQ). The tract at residues 183–417 (GSRRQIQRLE…TPEASLDSGE (235 aa)) is interaction with histone H3.3. Residues 347 to 570 (GVDPALSDPV…SPVSQLFELE (224 aa)) form a necessary for interaction with USP7 region. The tract at residues 384-724 (DKSEEGERKK…PRPGTCKTSV (341 aa)) is disordered. The Nuclear localization signal motif lies at 391-395 (RKKRR). 2 positions are modified to phosphoserine: serine 412 and serine 424. The stretch at 430 to 489 (ASRAETDDEDDEESDEEEEEEEEEEEEEATDSEEEEDLEQMQEGQEDDEEEDEEEEAAAG) forms a coiled coil. A compositionally biased stretch (acidic residues) spans 435 to 486 (TDDEDDEESDEEEEEEEEEEEEEATDSEEEEDLEQMQEGQEDDEEEDEEEEA). Threonine 459 carries the phosphothreonine modification. Phosphoserine is present on residues serine 495 and serine 498. The segment covering 496 to 505 (PMSSLQISNE) has biased composition (polar residues). The interaction with MAP3K5 stretch occupies residues 501–625 (QISNEKNLEP…GVSPHNWGDS (125 aa)). Lysine 512 carries the post-translational modification N6-acetyllysine. Residues 514-524 (ISRSSGEQQNK) show a composition bias toward polar residues. Low complexity predominate over residues 529–542 (SPSLLSEEPLAPSS). The span at 551 to 561 (QPEELTLEEES) shows a compositional bias: acidic residues. Phosphoserine occurs at positions 561 and 580. Residues 578–590 (TPSSVETDISSSR) are compositionally biased toward polar residues. The tract at residues 626 to 740 (GPPCKKSRKE…EEIIVLSDSD (115 aa)) is interaction with SPOP. (Microbial infection) Interaction with Puumala hantavirus nucleoprotein stretches follow at residues 627–634 (PPCKKSRK) and 658–663 (KNGKKI). The Nuclear localization signal motif lies at 628 to 634 (PCKKSRK). Glycyl lysine isopeptide (Lys-Gly) (interchain with G-Cter in SUMO1) cross-links involve residues lysine 630 and lysine 631. Basic and acidic residues predominate over residues 650-660 (ERQRSVHEKNG). 2 positions are modified to phosphoserine: serine 668 and serine 671. Over residues 673 to 683 (LASLAPVADSS) the composition is skewed to low complexity. Residues serine 688, serine 702, serine 737, and serine 739 each carry the phosphoserine modification. A compositionally biased stretch (polar residues) spans 693–711 (LVTSSLCIPSPARLSQTPH). The sumo interaction motif (SIM) stretch occupies residues 733–740 (IIVLSDSD).

It belongs to the DAXX family. Homomultimer. Interacts (via C-terminus) with TNFRSF6 (via death domain). Interacts with PAX5, SLC2A4/GLUT4, MAP3K5, TGFBR2, phosphorylated dimeric HSPB1/HSP27, CENPC, ETS1, sumoylated PML, UBE2I, MCRS1 and TP53. Interacts (via N-terminus) with HIPK2 and HIPK3. Interacts with HIPK1, which induces translocation from PML/POD/ND10 nuclear bodies to chromatin and enhances association with HDAC1. Interacts (non-phosphorylated) with PAX3, PAX7, DEK, HDAC1, HDAC2, HDAC3, acetylated histone H4 and histones H2A, H2B, H3, H3.3 and H4. Interacts with SPOP; mediating CUL3-dependent proteasomal degradation. Interacts with CBP; the interaction is dependent the sumoylation of CBP and suppresses CBP transcriptional activity via recruitment of HDAC2 directly in the complex with TP53 and HIPK2. Interacts with AXIN1; the interaction stimulates the interaction of DAXX with TP53, stimulates 'Ser-46' phosphorylation of TP53 on and induces cell death on UV irradiation. Interacts with MDM2; the interaction is direct. Interacts with USP7; the interaction is direct and independent of MDM2 and TP53. Part of a complex with DAXX, MDM2 and USP7 under non-stress conditions. Interacts (via N-terminus) with RASSF1 (via C-terminus); the interaction is independent of MDM2 and TP53; RASSF1 isoform A disrupts interactions among MDM2, DAXX and USP7, thus contributing to the efficient activation of TP53 by promoting MDM2 self-ubiquitination in cell-cycle checkpoint control in response to DNA damage. Interacts with ATRX to form the chromatin remodeling complex ATRX:DAXX. Interacts with HSF1 (via homotrimeric form preferentially); this interaction relieves homotrimeric HSF1 from repression of its transcriptional activity by HSP90-dependent multichaperone complex upon heat shock. Interacts with SUMO1P1/SUMO5. As to quaternary structure, (Microbial infection) Interacts with human cytomegalovirus/HHV-5 tegument phosphoprotein pp71 and protein UL123. In terms of assembly, (Microbial infection) Interacts with Epstein-Barr virus protein BNRF1. (Microbial infection) Interacts with human adenovirus 5 E1B-55K protein; this interaction might alterate the normal interactions of DAXX, PML, and TP53, which may contribute to cell transformation. As to quaternary structure, (Microbial infection) Interacts with Puumala hantavirus nucleoprotein. Sumoylated with SUMO1 on multiple lysine residues. In terms of processing, phosphorylated by HIPK1 upon glucose deprivation. Post-translationally, polyubiquitinated; which is promoted by CUL3 and SPOP and results in proteasomal degradation. Ubiquitinated by MDM2; inducing its degradation. Deubiquitinated by USP7; leading to stabilize it. Ubiquitous.

Its subcellular location is the cytoplasm. The protein resides in the nucleus. It is found in the nucleoplasm. The protein localises to the PML body. It localises to the nucleolus. Its subcellular location is the chromosome. The protein resides in the centromere. In terms of biological role, transcription corepressor known to repress transcriptional potential of several sumoylated transcription factors. Down-regulates basal and activated transcription. Its transcription repressor activity is modulated by recruiting it to subnuclear compartments like the nucleolus or PML/POD/ND10 nuclear bodies through interactions with MCSR1 and PML, respectively. Seems to regulate transcription in PML/POD/ND10 nuclear bodies together with PML and may influence TNFRSF6-dependent apoptosis thereby. Inhibits transcriptional activation of PAX3 and ETS1 through direct protein-protein interactions. Modulates PAX5 activity; the function seems to involve CREBBP. Acts as an adapter protein in a MDM2-DAXX-USP7 complex by regulating the RING-finger E3 ligase MDM2 ubiquitination activity. Under non-stress condition, in association with the deubiquitinating USP7, prevents MDM2 self-ubiquitination and enhances the intrinsic E3 ligase activity of MDM2 towards TP53, thereby promoting TP53 ubiquitination and subsequent proteasomal degradation. Upon DNA damage, its association with MDM2 and USP7 is disrupted, resulting in increased MDM2 autoubiquitination and consequently, MDM2 degradation, which leads to TP53 stabilization. Acts as a histone chaperone that facilitates deposition of histone H3.3. Acts as a targeting component of the chromatin remodeling complex ATRX:DAXX which has ATP-dependent DNA translocase activity and catalyzes the replication-independent deposition of histone H3.3 in pericentric DNA repeats outside S-phase and telomeres, and the in vitro remodeling of H3.3-containing nucleosomes. Does not affect the ATPase activity of ATRX but alleviates its transcription repression activity. Upon neuronal activation associates with regulatory elements of selected immediate early genes where it promotes deposition of histone H3.3 which may be linked to transcriptional induction of these genes. Required for the recruitment of histone H3.3:H4 dimers to PML-nuclear bodies (PML-NBs); the process is independent of ATRX and facilitated by ASF1A; PML-NBs are suggested to function as regulatory sites for the incorporation of newly synthesized histone H3.3 into chromatin. In case of overexpression of centromeric histone variant CENPA (as found in various tumors) is involved in its mislocalization to chromosomes; the ectopic localization involves a heterotypic tetramer containing CENPA, and histones H3.3 and H4 and decreases binding of CTCF to chromatin. Proposed to mediate activation of the JNK pathway and apoptosis via MAP3K5 in response to signaling from TNFRSF6 and TGFBR2. Interaction with HSPB1/HSP27 may prevent interaction with TNFRSF6 and MAP3K5 and block DAXX-mediated apoptosis. In contrast, in lymphoid cells JNC activation and TNFRSF6-mediated apoptosis may not involve DAXX. Shows restriction activity towards human cytomegalovirus (HCMV). Plays a role as a positive regulator of the heat shock transcription factor HSF1 activity during the stress protein response. This Homo sapiens (Human) protein is Death domain-associated protein 6 (DAXX).